We begin with the raw amino-acid sequence, 402 residues long: O-glucosyltransferase rumi homolog (402 aa).

An N-terminal signal peptide occupies residues 1 to 20; that stretch reads MPYLEIVLALLVLSFQLGHS. Cystine bridges form between C67–C74, C72–C375, C118–C124, and C279–C302. Residue N71 is glycosylated (N-linked (GlcNAc...) asparagine). D149 (proton donor/acceptor) is an active-site residue. Residues 189–194 are interaction with the consensus sequence C-X-S-X-[PA]-C in peptide substrates; the sequence is AISLYP. Residues 226–230, R234, 273–275, and 291–295 each bind UDP-alpha-D-glucose; these read RGSRT, VRL, and AASFR.

This sequence belongs to the glycosyltransferase 90 family.

It is found in the endoplasmic reticulum lumen. Its subcellular location is the secreted. It functions in the pathway protein modification; protein glycosylation. In terms of biological role, protein O-glucosyltransferase. Catalyzes the reaction that attaches glucose through an O-glycosidic linkage to a conserved serine residue found in the consensus sequence C-X-S-X-[PA]-C in epidermal growth factor-like repeats. Regulates Notch signaling by glucosylating Notch in the ER, glucosylation is required for the correct folding and cleavage of Notch. This is O-glucosyltransferase rumi homolog from Aedes aegypti (Yellowfever mosquito).